Reading from the N-terminus, the 237-residue chain is Protein-S-isoprenylcysteine O-methyltransferase (237 aa).

The next 4 membrane-spanning stretches (helical) occupy residues 26 to 46, 53 to 73, 92 to 112, and 116 to 136; these read SSAI…LFIF, FGIY…WVTM, FNMA…FFPS, and FSLW…RSVA. Residues Q149, 156–159, Y164, and 169–172 each bind S-adenosyl-L-methionine; these read HVLV and HPSY. A helical membrane pass occupies residues 184 to 204; that stretch reads VILMNPISIIGFGWASWSFFS. R206 contacts substrate. Residue E210 participates in S-adenosyl-L-methionine binding.

Belongs to the class VI-like SAM-binding methyltransferase superfamily. Isoprenylcysteine carboxyl methyltransferase family.

The protein resides in the endoplasmic reticulum membrane. The catalysed reaction is [protein]-C-terminal S-[(2E,6E)-farnesyl]-L-cysteine + S-adenosyl-L-methionine = [protein]-C-terminal S-[(2E,6E)-farnesyl]-L-cysteine methyl ester + S-adenosyl-L-homocysteine. Functionally, methylates the C-terminal cysteine residues of small GTPases and the heterotrimeric G protein gamma subunit in response to cAMP. The methylation is required for intercellular signaling and regulation of cAMP waves propagation. It also seems to induce the activity of car1, a G protein-coupled receptor which senses extracellular cAMP during the aggregation phase of development. The protein is Protein-S-isoprenylcysteine O-methyltransferase (icmt-1) of Dictyostelium discoideum (Social amoeba).